Here is a 109-residue protein sequence, read N- to C-terminus: Small ribosomal subunit protein uS17 (109 aa).

It belongs to the universal ribosomal protein uS17 family. Part of the 30S ribosomal subunit.

Its function is as follows. One of the primary rRNA binding proteins, it binds specifically to the 5'-end of 16S ribosomal RNA. This Methanococcus maripaludis (strain DSM 14266 / JCM 13030 / NBRC 101832 / S2 / LL) protein is Small ribosomal subunit protein uS17.